The sequence spans 560 residues: Protein DA1-related 7 (560 aa).

UIM domains lie at 43–62 (SEAD…QETS), 92–111 (EEDQ…KGKS), and 155–174 (NEDA…KGQI). One can recognise an LIM zinc-binding domain in the interval 199–269 (SICDGCKSAI…HVCKKKFPGR (71 aa)).

In terms of assembly, interacts with ubiquitin.

Ubiquitin receptor that probably regulates developmental process. The sequence is that of Protein DA1-related 7 (DAR7) from Arabidopsis thaliana (Mouse-ear cress).